We begin with the raw amino-acid sequence, 345 residues long: Green-sensitive opsin (345 aa).

The Extracellular portion of the chain corresponds to 1–37; sequence MENGTEGKNFYIPMNNRTGLVRSPYEYPQYYLADPWQ. Asn-3 and Asn-16 each carry an N-linked (GlcNAc...) asparagine glycan. Residues 38–62 form a helical membrane-spanning segment; the sequence is FKLLGIYMFFLILTGFPINALTLVV. Residues 63 to 74 lie on the Cytoplasmic side of the membrane; that stretch reads TAQNKKLRQPLN. Residues 75–100 form a helical membrane-spanning segment; it reads FILVNLAVAGLIMVCFGFTVCIYSCM. The Extracellular portion of the chain corresponds to 101–114; the sequence is VGYFSLGPLGCTIE. Cys-111 and Cys-188 form a disulfide bridge. Residues 115-134 form a helical membrane-spanning segment; that stretch reads GFMATLGGQVSLWSLVVLAI. The Cytoplasmic segment spans residues 135–153; the sequence is ERYIVVCKPMGSFKFTATH. Residues 154–177 traverse the membrane as a helical segment; sequence SAAGCAFTWIMASSCAVPPLVGWS. Topologically, residues 178-203 are extracellular; that stretch reads RYIPEGIQVSCGPDYYTLAPGFNNES. N-linked (GlcNAc...) asparagine glycosylation is present at Asn-201. The chain crosses the membrane as a helical span at residues 204-231; sequence FVMYMFSCHFCVPVFTIFFTYGSLVMTV. Over 232-253 the chain is Cytoplasmic; that stretch reads KAAAAQQQDSASTQKAEKEVTR. Residues 254-277 traverse the membrane as a helical segment; sequence MCFLMVLGFLLAWVPYASYAAWIF. The Extracellular segment spans residues 278–285; that stretch reads FNRGAAFS. The helical transmembrane segment at 286–310 threads the bilayer; sequence AMSMAIPSFFSKSSALFNPIIYILL. The residue at position 297 (Lys-297) is an N6-(retinylidene)lysine. The Cytoplasmic segment spans residues 311-345; the sequence is NKQFRNCMLATIGMGGMVEDETSVSTSKTEVSTAA.

It belongs to the G-protein coupled receptor 1 family. Opsin subfamily. Post-translationally, phosphorylated on some or all of the serine and threonine residues present in the C-terminal region. As to expression, the color pigments are found in the cone photoreceptor cells.

It is found in the membrane. Its function is as follows. Visual pigments are the light-absorbing molecules that mediate vision. They consist of an apoprotein, opsin, covalently linked to cis-retinal. This is Green-sensitive opsin from Oryzias latipes (Japanese rice fish).